Reading from the N-terminus, the 408-residue chain is Chaperonin GroEL (408 aa).

Residues 30–33 (TLGP), lysine 51, and 87–91 (DGTTT) each bind ATP.

Belongs to the chaperonin (HSP60) family. In terms of assembly, forms a cylinder of 14 subunits composed of two heptameric rings stacked back-to-back. Interacts with the co-chaperonin GroES.

The protein localises to the cytoplasm. It carries out the reaction ATP + H2O + a folded polypeptide = ADP + phosphate + an unfolded polypeptide.. Its function is as follows. Together with its co-chaperonin GroES, plays an essential role in assisting protein folding. The GroEL-GroES system forms a nano-cage that allows encapsulation of the non-native substrate proteins and provides a physical environment optimized to promote and accelerate protein folding. The protein is Chaperonin GroEL of Rickettsia rickettsii.